The primary structure comprises 473 residues: Zinc transporter SLC39A7 (473 aa).

The chain crosses the membrane as a helical span at residues 11-31 (VAVGLLTWAALGLLVAGHGGH). Composition is skewed to basic and acidic residues over residues 44-56 (GHSH…DFHH) and 66-114 (HTHE…EHSH). The interval 44 to 120 (GHSHRHSHED…EHSHGGYGES (77 aa)) is disordered. At His66 the chain carries Pros-methylhistidine. 3 helical membrane-spanning segments follow: residues 138–158 (ALGA…LIPV), 169–189 (LQIL…LHLI), and 214–234 (GPIL…LVVE). The segment at 243-316 (GHEHSHGHGH…QHSGEEKAGS (74 aa)) is disordered. Phosphoserine is present on residues Ser278 and Ser279. Residues 298–316 (RPKDGPVRPQHSGEEKAGS) are compositionally biased toward basic and acidic residues. A helical transmembrane segment spans residues 388-408 (LLTAVGALAGTAFALLTEGGA). Residues 428-473 (GDQAATQASPRSTSLPPVGEEDFREDPGPRQKGQQEKSGINVNCVS) are disordered. Residues 431–442 (AATQASPRSTSL) are compositionally biased toward polar residues. The span at 452-462 (EDPGPRQKGQQ) shows a compositional bias: basic and acidic residues. Positions 463–473 (EKSGINVNCVS) are enriched in polar residues.

Belongs to the ZIP transporter (TC 2.A.5) family. KE4/Catsup subfamily. In terms of assembly, homodimer. In terms of processing, methylation at some His residue by METTL9 leads to reduced zinc-binding. Rapidly phosphorylated by CK2 following Zn(2+) treatment. This phosphorylation is required for efficient cytosolic Zn(2+) release.

It localises to the endoplasmic reticulum membrane. It is found in the golgi apparatus. The protein localises to the cis-Golgi network membrane. It carries out the reaction Zn(2+)(in) = Zn(2+)(out). Functionally, transports Zn(2+) from the endoplasmic reticulum (ER)/Golgi apparatus to the cytosol, playing an essential role in the regulation of cytosolic zinc levels. Acts as a gatekeeper of zinc release from intracellular stores, requiring post-translational activation by phosphorylation on residues, resulting in activation of multiple downstream pathways leading to cell growth and proliferation. Has an essential role in B cell development and is required for proper B cell receptor signaling. Plays an important role in maintaining intestinal epithelial homeostasis and skin dermis development by regulating ER function. Controls cell signaling pathways involved in glucose metabolism in skeletal muscle. Has a protective role against ER stress in different biological contexts. Mediates Zn(2+)-induced ferroptosis. In Sus scrofa (Pig), this protein is Zinc transporter SLC39A7 (SLC39A7).